The chain runs to 388 residues: Zinc finger protein 1 (388 aa).

Residues 1-19 (MSSIPNINWNDPNNGKSNT) show a composition bias toward polar residues. Disordered regions lie at residues 1–120 (MSSI…QQPL), 157–219 (LQQR…QQWD), and 236–311 (SSIQ…KPIT). Low complexity predominate over residues 20-38 (SRQSQPQPQLPSNVSPPNS). Composition is skewed to polar residues over residues 52-67 (YGSS…NPNT) and 88-97 (YPVQQTAQQR). 2 stretches are compositionally biased toward low complexity: residues 102–120 (LQQV…QQPL) and 157–172 (LQQR…KSQL). Polar residues predominate over residues 173-203 (NEQNAMMSASTQQYPVQDFTNPYPNAQNPAE). Low complexity-rich tracts occupy residues 204–217 (QQQQ…QSQQ) and 236–259 (SSIQ…KQQQ). The segment covering 268 to 278 (KKKPGRKPKLR) has biased composition (basic residues). Residues 282 to 294 (ESSSETPQVPKTA) show a composition bias toward polar residues. The zn(2)-C6 fungal-type DNA-binding region spans 318-345 (CLTCRQRKKRCCETRPRCTECTRLRLNC). A disordered region spans residues 348–367 (PKPGTEHKNKPKDQKDDENT). The span at 351-367 (GTEHKNKPKDQKDDENT) shows a compositional bias: basic and acidic residues.

It localises to the nucleus. Perhaps a regulatory role. May be involved in transcriptional activation. This Candida albicans (strain WO-1) (Yeast) protein is Zinc finger protein 1 (CZF1).